The primary structure comprises 328 residues: 4-hydroxythreonine-4-phosphate dehydrogenase (328 aa).

Positions 135 and 136 each coordinate substrate. Positions 165, 210, and 265 each coordinate a divalent metal cation. Residues Lys-273, Asn-282, and Arg-291 each coordinate substrate.

Belongs to the PdxA family. Homodimer. Zn(2+) is required as a cofactor. Requires Mg(2+) as cofactor. It depends on Co(2+) as a cofactor.

The protein resides in the cytoplasm. It catalyses the reaction 4-(phosphooxy)-L-threonine + NAD(+) = 3-amino-2-oxopropyl phosphate + CO2 + NADH. It functions in the pathway cofactor biosynthesis; pyridoxine 5'-phosphate biosynthesis; pyridoxine 5'-phosphate from D-erythrose 4-phosphate: step 4/5. Catalyzes the NAD(P)-dependent oxidation of 4-(phosphooxy)-L-threonine (HTP) into 2-amino-3-oxo-4-(phosphooxy)butyric acid which spontaneously decarboxylates to form 3-amino-2-oxopropyl phosphate (AHAP). This Pseudomonas aeruginosa (strain ATCC 15692 / DSM 22644 / CIP 104116 / JCM 14847 / LMG 12228 / 1C / PRS 101 / PAO1) protein is 4-hydroxythreonine-4-phosphate dehydrogenase.